Here is a 449-residue protein sequence, read N- to C-terminus: Intestinal acid phosphatase (449 aa).

The signal sequence occupies residues 1–19 (MVSAISIVAIFALEGFVTT). Over 20–428 (YSDGTKDLVF…TDLNKSSSFA (409 aa)) the chain is Extracellular. The Nucleophile role is filled by His36. Asp321 acts as the Proton donor in catalysis. The helical transmembrane segment at 429–449 (TVSMLFIAAILAINNNFLGLF) threads the bilayer.

It belongs to the histidine acid phosphatase family. Homodimer. In terms of processing, the N-terminus is blocked. In terms of tissue distribution, expressed in the intestine, specifically on the edge of the gut lumen, in the 14 posterior cells of the intestine.

Its subcellular location is the membrane. It carries out the reaction a phosphate monoester + H2O = an alcohol + phosphate. Functionally, acid phosphatase required for normal growth and development. Specifically required for normal gut differentiation. In Caenorhabditis elegans, this protein is Intestinal acid phosphatase.